The primary structure comprises 841 residues: MMARARLAAALIPATAILSCLRTESWDPCVQVVPNISYQCMELNLYKIPDNIPISTKMLDLSFNYLRHLGSHNFSSFPELQVLDLSRCEIKIIEDDTFQGLNHLSTLILTGNPIQSLAWGAFSGLSSLQKLVAVETNLVSLNDFPIGHLKNLKELNVAHNFIHSFKLPEYFSNLPNLEHLDLSNNKIQNIYYEDVKVLHQMPLLNLSLDLSLNPLDFIEPGTFKEIKLNGLTLRSNFNSSHVMKTCIQGLAGLKTNRLVLGEFKNERKLQRFDRSFLEGLCNLTIEQFRIAYLDKFSGDDTDLFNCLANVSVISLLSISLGSLQALLKDFRWQHLEIINCDFDKFPALKLSSLKKFVFTDNKDISTFTEFQLPSLQYLDLKRNHLSFKGCCSHTDFGTTNLKHLDLSFNDVITLGSNFMGLEQLEHLDFQHSTLKQINAFSAFLSLRNLRYLDISYTNIRIVFHGIFTGLVSLQTLKMAGNSFQNNLLPDIFTELTNLTVLDLSKCQLEQVAQTAFHSLSSLQVLNMSHNKLLSLDTFLYEPLHSLRILDCSFNRIMASKEQELQNLPRSLTWLNLTQNAFACVCEHQSFLQWVKDQRQLLVGAEQMMCAEPLDMEDMPVLSFRNATCQLSKTIISVSVVTVLLVSVVGVLVYKFYFHLMLLAGCKKYGRGESIYDAFVIYSSQDEDWVRNELVKNLEEGVPPFQLCLHYRDFIPGVAIAANIIQEGFHKSRKVIVVVSQHFIQSRWCIFEYEIAQTWQFLSSRAGIIFIVLQKLEKSLLRQQVELYRLLSRNTYLEWEDSVLGRHVFWRRLRKALLAGKPQSPEGTADAETNPQEATTST.

The signal sequence occupies residues 1 to 23 (MMARARLAAALIPATAILSCLRT). Topologically, residues 24-632 (ESWDPCVQVV…FRNATCQLSK (609 aa)) are extracellular. The cysteines at positions 29 and 40 are disulfide-linked. N-linked (GlcNAc...) asparagine glycans are attached at residues Asn-35 and Asn-73. LRR repeat units follow at residues 55–76 (STKMLDLSFNYLRHLGSHNFSS), 79–100 (ELQVLDLSRCEIKIIEDDTFQG), 103–124 (HLSTLILTGNPIQSLAWGAFSG), 127–148 (SLQKLVAVETNLVSLNDFPIGH), 151–172 (NLKELNVAHNFIHSFKLPEYFS), 176–197 (NLEHLDLSNNKIQNIYYEDVKV), and 205–225 (NLSLDLSLNPLDFIEPGTFKE). N-linked (GlcNAc...) asparagine glycans are attached at residues Asn-205, Asn-238, Asn-282, and Asn-309. The cysteines at positions 281 and 306 are disulfide-linked. LRR repeat units lie at residues 352 to 373 (SLKKFVFTDNKDISTFTEFQLP), 374 to 394 (SLQYLDLKRNHLSFKGCCSHT), 400 to 422 (NLKHLDLSFNDVITLGSNFMGLE), 423 to 444 (QLEHLDFQHSTLKQINAFSAFL), 448 to 469 (NLRYLDISYTNIRIVFHGIFTG), 472 to 495 (SLQTLKMAGNSFQNNLLPDIFTEL), 497 to 518 (NLTVLDLSKCQLEQVAQTAFHS), 521 to 542 (SLQVLNMSHNKLLSLDTFLYEP), and 545 to 568 (SLRILDCSFNRIMASKEQELQNLP). Residues Cys-390 and Cys-391 are joined by a disulfide bond. N-linked (GlcNAc...) asparagine glycosylation is found at Asn-497 and Asn-526. The N-linked (GlcNAc...) asparagine glycan is linked to Asn-575. In terms of domain architecture, LRRCT spans 579-630 (NAFACVCEHQSFLQWVKDQRQLLVGAEQMMCAEPLDMEDMPVLSFRNATCQL). 2 cysteine pairs are disulfide-bonded: Cys-583/Cys-609 and Cys-585/Cys-628. N-linked (GlcNAc...) asparagine glycosylation is present at Asn-625. A helical transmembrane segment spans residues 633–653 (TIISVSVVTVLLVSVVGVLVY). The Cytoplasmic portion of the chain corresponds to 654-841 (KFYFHLMLLA…TNPQEATTST (188 aa)). Residues 673–816 (SIYDAFVIYS…VFWRRLRKAL (144 aa)) enclose the TIR domain. A disordered region spans residues 820-841 (KPQSPEGTADAETNPQEATTST). Residues 830–841 (AETNPQEATTST) are compositionally biased toward polar residues.

It belongs to the Toll-like receptor family. In terms of assembly, belongs to the lipopolysaccharide (LPS) receptor, a multi-protein complex containing at least CD14, LY96 and TLR4. Binding to bacterial LPS leads to homodimerization. Interacts with LY96 via the extracellular domain. Interacts with MYD88 and TIRAP via their respective TIR domains. Interacts with TICAM2. Interacts with NOX4. Interacts with CNPY3 and HSP90B1; this interaction is required for proper folding in the endoplasmic reticulum. Interacts with MAP3K21; this interaction leads to negative regulation of TLR4 signaling. Interacts with CD36, following CD36 stimulation by oxLDL or amyloid-beta 42, and forms a heterodimer with TLR6. The trimeric complex is internalized and triggers inflammatory response. LYN kinase activity facilitates TLR4-TLR6 heterodimerization and signal initiation. Interacts with TICAM1 in response to LPS in a WDFY1-dependent manner. Interacts with WDFY1 in response to LPS. Interacts with SMPDL3B. Interacts with CEACAM1; upon lipopolysaccharide stimulation, forms a complex including TLR4 and the phosphorylated form of SYK and CEACAM1, which in turn, recruits PTPN6 that dephosphorylates SYK, reducing the production of reactive oxygen species (ROS) and lysosome disruption, which in turn, reduces the activity of the inflammasome. Interacts with RFTN1; the interaction occurs in response to lipopolysaccharide stimulation. Interacts with SCIMP; the interaction occurs in response to lipopolysaccharide stimulation and is enhanced by phosphorylation of SCIMP by LYN. This interaction facilitates the phosphorylation of TLR4 by LYN which elicits a selective cytokine response in macrophages. Interacts with TRAF3IP3. Interacts with TREM1; this interaction enhances TLR4-mediated inflammatory response. Interacts with ZG16B/PAUF. Interacts with CD82; this interaction inhibits TLR4-mediated signaling pathway. Phosphorylated on tyrosine residues by LYN after binding lipopolysaccharide. Post-translationally, ubiquitinated by RNF128 via 'Lys-28'-linked polyubiquitin chains, leading to proteasomal degradation.

Its subcellular location is the cell membrane. It localises to the early endosome. It is found in the cell projection. The protein resides in the ruffle. Transmembrane receptor that functions as a pattern recognition receptor recognizing pathogen- and damage-associated molecular patterns (PAMPs and DAMPs) to induce innate immune responses via downstream signaling pathways. At the plasma membrane, cooperates with LY96 to mediate the innate immune response to bacterial lipopolysaccharide (LPS). Also involved in LPS-independent inflammatory responses triggered by free fatty acids, such as palmitate, and Ni(2+). Mechanistically, acts via MYD88, TIRAP and TRAF6, leading to NF-kappa-B activation, cytokine secretion and the inflammatory response. Alternatively, CD14-mediated TLR4 internalization via endocytosis is associated with the initiation of a MYD88-independent signaling via the TICAM1-TBK1-IRF3 axis leading to type I interferon production. In addition to the secretion of proinflammatory cytokines, initiates the activation of NLRP3 inflammasome and formation of a positive feedback loop between autophagy and NF-kappa-B signaling cascade. In complex with TLR6, promotes inflammation in monocytes/macrophages by associating with TLR6 and the receptor CD86. Upon ligand binding, such as oxLDL or amyloid-beta 42, the TLR4:TLR6 complex is internalized and triggers inflammatory response, leading to NF-kappa-B-dependent production of CXCL1, CXCL2 and CCL9 cytokines, via MYD88 signaling pathway, and CCL5 cytokine, via TICAM1 signaling pathway. In myeloid dendritic cells, vesicular stomatitis virus glycoprotein G but not LPS promotes the activation of IRF7, leading to type I IFN production in a CD14-dependent manner. In Bos taurus (Bovine), this protein is Toll-like receptor 4 (TLR4).